The sequence spans 186 residues: Ribosome-recycling factor (186 aa).

The protein belongs to the RRF family.

The protein localises to the cytoplasm. Responsible for the release of ribosomes from messenger RNA at the termination of protein biosynthesis. May increase the efficiency of translation by recycling ribosomes from one round of translation to another. This chain is Ribosome-recycling factor, found in Ralstonia nicotianae (strain ATCC BAA-1114 / GMI1000) (Ralstonia solanacearum).